The sequence spans 729 residues: Fatty acid oxidation complex subunit alpha (729 aa).

Residues 1 to 189 form an enoyl-CoA hydratase/isomerase region; that stretch reads MLYKGDTLYL…KIGLVDGVVK (189 aa). Aspartate 296 contacts substrate. Residues 311–729 are 3-hydroxyacyl-CoA dehydrogenase; it reads ETPKQAAVLG…ARPVGDLKTA (419 aa). NAD(+) contacts are provided by residues methionine 324, aspartate 343, 400–402, lysine 407, and serine 429; that span reads VVE. Histidine 450 functions as the For 3-hydroxyacyl-CoA dehydrogenase activity in the catalytic mechanism. Asparagine 453 contacts NAD(+). Asparagine 500 and tyrosine 660 together coordinate substrate. Residues 708-729 are disordered; sequence RHNEPYYPPVEPARPVGDLKTA.

This sequence in the N-terminal section; belongs to the enoyl-CoA hydratase/isomerase family. The protein in the C-terminal section; belongs to the 3-hydroxyacyl-CoA dehydrogenase family. As to quaternary structure, heterotetramer of two alpha chains (FadB) and two beta chains (FadA).

It catalyses the reaction a (3S)-3-hydroxyacyl-CoA + NAD(+) = a 3-oxoacyl-CoA + NADH + H(+). The enzyme catalyses a (3S)-3-hydroxyacyl-CoA = a (2E)-enoyl-CoA + H2O. It carries out the reaction a 4-saturated-(3S)-3-hydroxyacyl-CoA = a (3E)-enoyl-CoA + H2O. The catalysed reaction is (3S)-3-hydroxybutanoyl-CoA = (3R)-3-hydroxybutanoyl-CoA. It catalyses the reaction a (3Z)-enoyl-CoA = a 4-saturated (2E)-enoyl-CoA. The enzyme catalyses a (3E)-enoyl-CoA = a 4-saturated (2E)-enoyl-CoA. The protein operates within lipid metabolism; fatty acid beta-oxidation. Involved in the aerobic and anaerobic degradation of long-chain fatty acids via beta-oxidation cycle. Catalyzes the formation of 3-oxoacyl-CoA from enoyl-CoA via L-3-hydroxyacyl-CoA. It can also use D-3-hydroxyacyl-CoA and cis-3-enoyl-CoA as substrate. In Escherichia coli (strain SMS-3-5 / SECEC), this protein is Fatty acid oxidation complex subunit alpha.